The primary structure comprises 176 residues: ATP synthase subunit b, chloroplastic (176 aa).

Residues 27-49 (ILNLAAVFALLAYVGTDFVSSLL) form a helical membrane-spanning segment.

It belongs to the ATPase B chain family. As to quaternary structure, F-type ATPases have 2 components, F(1) - the catalytic core - and F(0) - the membrane proton channel. F(1) has five subunits: alpha(3), beta(3), gamma(1), delta(1), epsilon(1). F(0) has four main subunits: a(1), b(1), b'(1) and c(10-14). The alpha and beta chains form an alternating ring which encloses part of the gamma chain. F(1) is attached to F(0) by a central stalk formed by the gamma and epsilon chains, while a peripheral stalk is formed by the delta, b and b' chains.

The protein resides in the plastid. The protein localises to the chloroplast thylakoid membrane. F(1)F(0) ATP synthase produces ATP from ADP in the presence of a proton or sodium gradient. F-type ATPases consist of two structural domains, F(1) containing the extramembraneous catalytic core and F(0) containing the membrane proton channel, linked together by a central stalk and a peripheral stalk. During catalysis, ATP synthesis in the catalytic domain of F(1) is coupled via a rotary mechanism of the central stalk subunits to proton translocation. Functionally, component of the F(0) channel, it forms part of the peripheral stalk, linking F(1) to F(0). The chain is ATP synthase subunit b, chloroplastic from Nephroselmis olivacea (Green alga).